The primary structure comprises 430 residues: MTSLKVLIAGAGIGGPAAAFWLSRIGCEVTVVERSPRLRATGQQVDLSGQGIVVTRMMGIEDDLRAVRCPERGMRFVDHQGVTKAFFPVDYSGKAVYSPTQEVEVMRGDLVRILYDATKTLRGVKYVFDCHIKHFSQDDAPSGGKVHVALSDGTQDSYDILIGADGIASATREMMLGTSFPDLHRDLGVYMAYFTAPSQKDDTFDWSVCHISGGKAIMTRRDQPENIRVYLATRVGFDVLDAAKTLADQKAALISLFKGTQGWQVERFLNNLENSPEADDLYCQRMSQIRLPKGAWSKGRAVLLGDAAFCPGAIGGGVGTTAALIGAYVLAGEIEKEWEGCGRKTEEFNAQNATKEYERIVRPFITSRSDMSTWMVRLWLPESNFGVKTIQTIAGFAAGSQMSKYRGNSKPADETQKLEYPDYFGLGPKP.

FAD contacts are provided by residues 11-14, 33-34, Gln43, Arg107, Tyr282, and Asp306; these read AGIG and ER.

This sequence belongs to the aromatic-ring hydroxylase family. Requires FAD as cofactor.

The protein operates within secondary metabolite biosynthesis; terpenoid biosynthesis. Functionally, flavin-dependent monooxygenase; part of the gene cluster that mediates the biosynthesis of eupenifeldin, a bistropolone meroterpenoid that acts as an antitumor agent. The first step of eupenifeldin biosynthesis is the biosynthesis of 3-methylorcinaldehyde performed by the non-reducing polyketide synthase eupA. Oxidative dearomatization of 3-methylorcinaldehyde likely catalyzed by the FAD-dependent monooxygenase eupB is followed by oxidative ring expansion by the 2-oxoglutarate-dependent dioxygenase eupC to provide the first tropolone metabolite, tropolone stipitaldehyde. In parallel, generation of sesquiterpene alpha-humulene from farnesylpyrophosphate (FPP) is catalyzed by the terpene cyclase eupE. The cytochrome P450 monooxygenase eupD then hydroxylates humulene to humulenol. The putative Diels-Alderase eupF probably catalyzes the formation of the tropolone-humulene skeleton by linking humulenol and the polyketide moiety. The short-chain dehydrogenase/reductase eupG and the flavin-dependent monooxygenase eupH are also essential for eupenifeldin biosynthesis and are likely the additional decorating enzymes of the tropolone-humulene skeleton to produce final eupenifeldin or derivatives. The protein is Flavin-dependent monooxygenase eupH of Phoma sp.